We begin with the raw amino-acid sequence, 1380 residues long: DNA-directed RNA polymerase subunit beta (1380 aa).

The protein belongs to the RNA polymerase beta chain family. In terms of assembly, the RNAP catalytic core consists of 2 alpha, 1 beta, 1 beta' and 1 omega subunit. When a sigma factor is associated with the core the holoenzyme is formed, which can initiate transcription.

It catalyses the reaction RNA(n) + a ribonucleoside 5'-triphosphate = RNA(n+1) + diphosphate. Its function is as follows. DNA-dependent RNA polymerase catalyzes the transcription of DNA into RNA using the four ribonucleoside triphosphates as substrates. The sequence is that of DNA-directed RNA polymerase subunit beta from Rhizobium meliloti (strain 1021) (Ensifer meliloti).